A 346-amino-acid chain; its full sequence is Tetraacyldisaccharide 4'-kinase (346 aa).

Position 54-61 (54-61) interacts with ATP; it reads TVGGAGKT.

It belongs to the LpxK family.

The enzyme catalyses a lipid A disaccharide + ATP = a lipid IVA + ADP + H(+). It participates in glycolipid biosynthesis; lipid IV(A) biosynthesis; lipid IV(A) from (3R)-3-hydroxytetradecanoyl-[acyl-carrier-protein] and UDP-N-acetyl-alpha-D-glucosamine: step 6/6. In terms of biological role, transfers the gamma-phosphate of ATP to the 4'-position of a tetraacyldisaccharide 1-phosphate intermediate (termed DS-1-P) to form tetraacyldisaccharide 1,4'-bis-phosphate (lipid IVA). The sequence is that of Tetraacyldisaccharide 4'-kinase from Sinorhizobium fredii (strain NBRC 101917 / NGR234).